Consider the following 262-residue polypeptide: Nodulation protein J (262 aa).

The 227-residue stretch at 33 to 259 (ASILGNLADP…FLSTALLRRR (227 aa)) folds into the ABC transmembrane type-2 domain. 7 consecutive transmembrane segments (helical) span residues 35–55 (ILGNLADPLIYLFGLGAGLGM), 62–82 (GVSYIAFLSAGMVATSAMTAS), 102–122 (AILHTQVTIGDIVLGELAWAA), 127–147 (LAGTGIGVVAATLGYTEWVSL), 148–168 (LYALPVIALTGLAFASLAMIV), 177–197 (YFIFYQTLVITPMLFLSGAVF), and 231–251 (LVHVGLHIGALCCYAVVPFFL).

It belongs to the ABC-2 integral membrane protein family. Lipooligosaccharide exporter (TC 3.A.1.102) subfamily. The complex is composed of two ATP-binding proteins (NodI) and two transmembrane proteins (NodJ).

It localises to the cell inner membrane. Functionally, part of the ABC transporter complex NodIJ involved in the export of the nodulation factors (Nod factors), the bacterial signal molecules that induce symbiosis and subsequent nodulation induction. Nod factors are LCO (lipo-chitin oligosaccharide), a modified beta-1,4-linked N-acetylglucosamine oligosaccharide. This subunit encodes the transporter. The polypeptide is Nodulation protein J (nodJ) (Rhizobium meliloti (strain 1021) (Ensifer meliloti)).